Consider the following 247-residue polypeptide: GTP cyclohydrolase 1 type 2 homolog (247 aa).

Residues His63, His64, Asp101, His215, and Glu219 each contribute to the a divalent metal cation site.

It belongs to the GTP cyclohydrolase I type 2/NIF3 family. In terms of assembly, homohexamer.

This Buchnera aphidicola subsp. Baizongia pistaciae (strain Bp) protein is GTP cyclohydrolase 1 type 2 homolog.